The primary structure comprises 64 residues: DNA-binding protein 7d (64 aa).

N6-methyllysine occurs at positions 5, 7, 61, 63, and 64.

The protein belongs to the 7 kDa DNA-binding/endoribonuclease P2 family. In terms of assembly, monomer.

The protein resides in the cytoplasm. In terms of biological role, can constrain negative DNA supercoils. May be involved in maintaining the integrity of the genome at high temperature. Stimulates the Holliday junction cleavage activity of Hjc. This chain is DNA-binding protein 7d (sso7d), found in Saccharolobus solfataricus (strain ATCC 35092 / DSM 1617 / JCM 11322 / P2) (Sulfolobus solfataricus).